A 242-amino-acid polypeptide reads, in one-letter code: Caspase-14 (242 aa).

A propeptide spanning residues 1-5 (MSNPR) is cleaved from the precursor. Catalysis depends on residues His-89 and Cys-132. A propeptide spanning residues 147–152 (EIVMVI) is cleaved from the precursor.

Belongs to the peptidase C14A family. As to quaternary structure, heterodimer of a large and a small subunit, both processed from the precursor; the mature active form is a p17/p10 dimer and the intermediate form a p20/p8 dimer. Maturation by proteolytic processing appears to be a two-step process. The precursor is processed by KLK7 to yield the p20/p8 intermediate form which acts on the precursor to yield the p17/p10 mature form. Initially, cleavage between Ile-152 and Lys-153 has been proposed to yield the large and small subunits of the active enzyme. As to expression, expressed in keratinocytes of adult skin suprabasal layers (from spinous layers to the stratum granulosum and stratum corneum) (at protein level). Expressed in keratinocytes of hair shaft and sebaceous glands (at protein level). In psoriatic skin only expressed at very low levels. The p17/10 mature form is expressed in epidermis stratum corneum, the p20/p8 intermediate form in epidermis upper granular cells of the stratum granulosum.

Its subcellular location is the cytoplasm. The protein localises to the nucleus. With respect to regulation, inhibited by caspase-1 inhibitor YVAD-FMK and the pan-caspase inhibitor VAD-FMK. Its function is as follows. Non-apoptotic caspase involved in epidermal differentiation. Is the predominant caspase in epidermal stratum corneum. Seems to play a role in keratinocyte differentiation and is required for cornification. Regulates maturation of the epidermis by proteolytically processing filaggrin. In vitro has a preference for the substrate [WY]-X-X-D motif and is active on the synthetic caspase substrate WEHD-ACF. Involved in processing of prosaposin in the epidermis. May be involved in retinal pigment epithelium cell barrier function. Involved in DNA degradation in differentiated keratinocytes probably by cleaving DFFA/ICAD leading to liberation of DFFB/CAD. The sequence is that of Caspase-14 (CASP14) from Homo sapiens (Human).